The chain runs to 506 residues: Maturase K (506 aa).

The protein belongs to the intron maturase 2 family. MatK subfamily.

It is found in the plastid. It localises to the chloroplast. In terms of biological role, usually encoded in the trnK tRNA gene intron. Probably assists in splicing its own and other chloroplast group II introns. The protein is Maturase K of Melilotus albus (White sweet clover).